A 210-amino-acid polypeptide reads, in one-letter code: Inner membrane-spanning protein YciB (210 aa).

6 consecutive transmembrane segments (helical) span residues 19 to 39, 53 to 73, 78 to 98, 115 to 135, 148 to 168, and 175 to 195; these read LVLE…GDWL, IFIA…VSWI, LPMM…LTLW, LFGA…GYVF, KLTI…EIVW, and FWVA…TLAQ.

This sequence belongs to the YciB family.

It is found in the cell inner membrane. Plays a role in cell envelope biogenesis, maintenance of cell envelope integrity and membrane homeostasis. This is Inner membrane-spanning protein YciB from Sinorhizobium fredii (strain NBRC 101917 / NGR234).